We begin with the raw amino-acid sequence, 556 residues long: Oxygen-dependent choline dehydrogenase (556 aa).

4-33 serves as a coordination point for FAD; that stretch reads DYIIIGAGSAGNVLATRLTEDPNTSVLLLE. Residue His473 is the Proton acceptor of the active site.

This sequence belongs to the GMC oxidoreductase family. It depends on FAD as a cofactor.

The enzyme catalyses choline + A = betaine aldehyde + AH2. It carries out the reaction betaine aldehyde + NAD(+) + H2O = glycine betaine + NADH + 2 H(+). The protein operates within amine and polyamine biosynthesis; betaine biosynthesis via choline pathway; betaine aldehyde from choline (cytochrome c reductase route): step 1/1. Its function is as follows. Involved in the biosynthesis of the osmoprotectant glycine betaine. Catalyzes the oxidation of choline to betaine aldehyde and betaine aldehyde to glycine betaine at the same rate. In Escherichia coli (strain K12 / DH10B), this protein is Oxygen-dependent choline dehydrogenase.